Here is a 508-residue protein sequence, read N- to C-terminus: CUGBP Elav-like family member 2 (508 aa).

Necessary for RNA-binding, TNNT2 exon 5 and NMDA R1 exon 21 inclusion stretches follow at residues 1–283 and 357–508; these read MRCP…LQNL and LAGM…SKPY. RRM domains follow at residues 40-123, 132-212, and 423-501; these read IKMF…PADS, RKLF…FADT, and ANLF…LKRS.

Belongs to the CELF/BRUNOL family. In terms of assembly, interacts with A1CF. Expressed in tongue, spleen and brain (at protein level). Expressed in liver, thigh, stomach, lung and heart to very low levels (at protein level). Expressed in heart, brain, lung and muscle.

It localises to the nucleus. It is found in the cytoplasm. Its function is as follows. RNA-binding protein implicated in the regulation of several post-transcriptional events. Involved in pre-mRNA alternative splicing, mRNA translation and stability. Mediates exon inclusion and/or exclusion in pre-mRNA that are subject to tissue-specific and developmentally regulated alternative splicing. Specifically activates exon 5 inclusion of TNNT2 in embryonic, but not adult, skeletal muscle. Activates TNNT2 exon 5 inclusion by antagonizing the repressive effect of PTB. Acts both as an activator and as a repressor of a pair of coregulated exons: promotes inclusion of the smooth muscle (SM) exon but exclusion of the non-muscle (NM) exon in actinin pre-mRNAs. Promotes inclusion of exonS 21 and exclusion of exon 5 of the NMDA receptor R1 pre-mRNA. Involved in the apoB RNA editing activity. Increases COX2 mRNA stability and inhibits COX2 mRNA translation in epithelial cells after radiation injury. Modulates the cellular apoptosis program by regulating COX2-mediated prostaglandin E2 (PGE2) expression. Binds to (CUG)n triplet repeats in the 3'-UTR of transcripts such as DMPK. Binds to the muscle-specific splicing enhancer (MSE) intronic sites flanking the TNNT2 alternative exon 5. Binds preferentially to UG-rich sequences, in particular UG repeat and UGUU motifs. Binds to apoB mRNA, specifically to AU-rich sequences located immediately upstream of the edited cytidine. Binds AU-rich sequences in the 3'-UTR of COX2 mRNA. Binds to an intronic RNA element responsible for the silencing of exon 21 splicing. Binds to (CUG)n repeats. May be a specific regulator of miRNA biogenesis. Binds to primary microRNA pri-MIR140 and, with CELF1, negatively regulates the processing to mature miRNA. The polypeptide is CUGBP Elav-like family member 2 (Celf2) (Mus musculus (Mouse)).